Reading from the N-terminus, the 292-residue chain is Phosphatidylglycerol--prolipoprotein diacylglyceryl transferase (292 aa).

The next 4 membrane-spanning stretches (helical) occupy residues 18–38 (LFGATFALRWYALAYIAGLLI), 67–87 (LLTWVILGVILGGRLGFVLFY), 105–125 (GGMSFHGGFLGVMVAVIAFCL), and 129–149 (ISILPVADLLAAATPPGLFLG). Position 150 (Arg-150) interacts with a 1,2-diacyl-sn-glycero-3-phospho-(1'-sn-glycerol). The next 3 membrane-spanning stretches (helical) occupy residues 193 to 213 (QLYEAALEGIVLFAILAILIW), 222 to 242 (GAVTGAFLAGYGCARFLVEFV), and 266 to 286 (GLTMGQILSLPMILLGLYFML).

This sequence belongs to the Lgt family.

It is found in the cell inner membrane. It carries out the reaction L-cysteinyl-[prolipoprotein] + a 1,2-diacyl-sn-glycero-3-phospho-(1'-sn-glycerol) = an S-1,2-diacyl-sn-glyceryl-L-cysteinyl-[prolipoprotein] + sn-glycerol 1-phosphate + H(+). Its pathway is protein modification; lipoprotein biosynthesis (diacylglyceryl transfer). Its function is as follows. Catalyzes the transfer of the diacylglyceryl group from phosphatidylglycerol to the sulfhydryl group of the N-terminal cysteine of a prolipoprotein, the first step in the formation of mature lipoproteins. The polypeptide is Phosphatidylglycerol--prolipoprotein diacylglyceryl transferase (Cereibacter sphaeroides (strain ATCC 17025 / ATH 2.4.3) (Rhodobacter sphaeroides)).